The sequence spans 439 residues: Protein translocase subunit SecY (439 aa).

Helical transmembrane passes span 23–43 (IASVVIALIIFRIGSFIPIPG), 77–97 (IFALGIMPYISSSIIIQLLTL), 125–145 (LVLALFQSIGIVTSLPKISGM), 154–174 (FYFYFTAIIILVTGTMFLMWL), 187–207 (ISIIIFIGIIAGLPSAIVHTI), 217–237 (ILLFLCVLILIFSVVFLVVFI), 274–294 (VIPAIFASSVVLFPVTIISWF), 317–337 (YLILYVFSIIFFCFFYTGLVF), 369–389 (IMIRLTLFGSLYIAFICLIPE), and 397–417 (VPFYFGGTSLLIVVVVIMDFI).

The protein belongs to the SecY/SEC61-alpha family. In terms of assembly, component of the Sec protein translocase complex. Heterotrimer consisting of SecY, SecE and SecG subunits. The heterotrimers can form oligomers, although 1 heterotrimer is thought to be able to translocate proteins. Interacts with the ribosome. Interacts with SecDF, and other proteins may be involved. Interacts with SecA.

The protein resides in the cell membrane. The central subunit of the protein translocation channel SecYEG. Consists of two halves formed by TMs 1-5 and 6-10. These two domains form a lateral gate at the front which open onto the bilayer between TMs 2 and 7, and are clamped together by SecE at the back. The channel is closed by both a pore ring composed of hydrophobic SecY resides and a short helix (helix 2A) on the extracellular side of the membrane which forms a plug. The plug probably moves laterally to allow the channel to open. The ring and the pore may move independently. The polypeptide is Protein translocase subunit SecY (Buchnera aphidicola subsp. Schizaphis graminum (strain Sg)).